A 150-amino-acid chain; its full sequence is Small ribosomal subunit protein uS11 (150 aa).

The tract at residues 126-150 (GRIEDVTPTPSDSTRRKGGRRGRRL) is disordered. Basic residues predominate over residues 141-150 (RKGGRRGRRL).

Belongs to the universal ribosomal protein uS11 family. As to quaternary structure, component of the small ribosomal subunit (SSU). Mature N.crassa ribosomes consist of a small (40S) and a large (60S) subunit. The 40S small subunit contains 1 molecule of ribosomal RNA (18S rRNA) and at least 32 different proteins. The large 60S subunit contains 3 rRNA molecules (26S, 5.8S and 5S rRNA) and at least 42 different proteins.

The protein localises to the cytoplasm. Component of the ribosome, a large ribonucleoprotein complex responsible for the synthesis of proteins in the cell. The small ribosomal subunit (SSU) binds messenger RNAs (mRNAs) and translates the encoded message by selecting cognate aminoacyl-transfer RNA (tRNA) molecules. The large subunit (LSU) contains the ribosomal catalytic site termed the peptidyl transferase center (PTC), which catalyzes the formation of peptide bonds, thereby polymerizing the amino acids delivered by tRNAs into a polypeptide chain. The nascent polypeptides leave the ribosome through a tunnel in the LSU and interact with protein factors that function in enzymatic processing, targeting, and the membrane insertion of nascent chains at the exit of the ribosomal tunnel. uS11 is involved in nucleolar processing of pre-18S ribosomal RNA and ribosome assembly. The sequence is that of Small ribosomal subunit protein uS11 (rps-14) from Neurospora crassa (strain ATCC 24698 / 74-OR23-1A / CBS 708.71 / DSM 1257 / FGSC 987).